The following is a 384-amino-acid chain: Succinyl-diaminopimelate desuccinylase (384 aa).

H75 serves as a coordination point for Zn(2+). D77 is an active-site residue. D108 serves as a coordination point for Zn(2+). The active-site Proton acceptor is the E142. Positions 143, 171, and 357 each coordinate Zn(2+).

Belongs to the peptidase M20A family. DapE subfamily. Homodimer. Requires Zn(2+) as cofactor. The cofactor is Co(2+).

The catalysed reaction is N-succinyl-(2S,6S)-2,6-diaminopimelate + H2O = (2S,6S)-2,6-diaminopimelate + succinate. It functions in the pathway amino-acid biosynthesis; L-lysine biosynthesis via DAP pathway; LL-2,6-diaminopimelate from (S)-tetrahydrodipicolinate (succinylase route): step 3/3. Catalyzes the hydrolysis of N-succinyl-L,L-diaminopimelic acid (SDAP), forming succinate and LL-2,6-diaminopimelate (DAP), an intermediate involved in the bacterial biosynthesis of lysine and meso-diaminopimelic acid, an essential component of bacterial cell walls. This Shewanella oneidensis (strain ATCC 700550 / JCM 31522 / CIP 106686 / LMG 19005 / NCIMB 14063 / MR-1) protein is Succinyl-diaminopimelate desuccinylase.